A 313-amino-acid polypeptide reads, in one-letter code: Porphobilinogen deaminase (313 aa).

The residue at position 242 (cysteine 242) is an S-(dipyrrolylmethanemethyl)cysteine.

This sequence belongs to the HMBS family. As to quaternary structure, monomer. The cofactor is dipyrromethane.

The catalysed reaction is 4 porphobilinogen + H2O = hydroxymethylbilane + 4 NH4(+). It participates in porphyrin-containing compound metabolism; protoporphyrin-IX biosynthesis; coproporphyrinogen-III from 5-aminolevulinate: step 2/4. In terms of biological role, tetrapolymerization of the monopyrrole PBG into the hydroxymethylbilane pre-uroporphyrinogen in several discrete steps. The polypeptide is Porphobilinogen deaminase (Pseudomonas fluorescens (strain SBW25)).